A 579-amino-acid chain; its full sequence is Membrane protein insertase YidC (579 aa).

A helical transmembrane segment spans residues 10-30; sequence LVIVTILSALILFGWSFVTKH. A disordered region spans residues 35-61; that stretch reads PPAPTQQGKNQPKAELTAEESGDKPLK. A run of 5 helical transmembrane segments spans residues 330–350, 351–371, 423–443, 478–498, and 523–543; these read FDKA…FYYL, DWLF…VFTI, VNPF…IALY, LLHF…ILGI, and PLIS…YYIF. Residues 560–572 are compositionally biased toward basic and acidic residues; sequence STPEERQDRAERK. Residues 560-579 are disordered; sequence STPEERQDRAERKRPSKKKA.

The protein belongs to the OXA1/ALB3/YidC family. Type 1 subfamily. In terms of assembly, interacts with the Sec translocase complex via SecD. Specifically interacts with transmembrane segments of nascent integral membrane proteins during membrane integration.

Its subcellular location is the cell inner membrane. Required for the insertion and/or proper folding and/or complex formation of integral membrane proteins into the membrane. Involved in integration of membrane proteins that insert both dependently and independently of the Sec translocase complex, as well as at least some lipoproteins. Aids folding of multispanning membrane proteins. The chain is Membrane protein insertase YidC from Zymomonas mobilis subsp. mobilis (strain ATCC 31821 / ZM4 / CP4).